We begin with the raw amino-acid sequence, 121 residues long: Small ribosomal subunit protein uS13 (121 aa).

Residues 98-121 (RGQKTRNNAHTVKGKPKSIAGKKK) are disordered. Basic residues predominate over residues 109 to 121 (VKGKPKSIAGKKK).

The protein belongs to the universal ribosomal protein uS13 family. In terms of assembly, part of the 30S ribosomal subunit. Forms a loose heterodimer with protein S19. Forms two bridges to the 50S subunit in the 70S ribosome.

In terms of biological role, located at the top of the head of the 30S subunit, it contacts several helices of the 16S rRNA. In the 70S ribosome it contacts the 23S rRNA (bridge B1a) and protein L5 of the 50S subunit (bridge B1b), connecting the 2 subunits; these bridges are implicated in subunit movement. Contacts the tRNAs in the A and P-sites. This Phytoplasma australiense protein is Small ribosomal subunit protein uS13.